Consider the following 348-residue polypeptide: Ephrin-4 (348 aa).

An N-terminal signal peptide occupies residues methionine 1–alanine 20. Residues aspartate 21–valine 178 form the Ephrin RBD domain. Asparagine 28 carries N-linked (GlcNAc...) asparagine glycosylation. Intrachain disulfides connect cysteine 53-cysteine 91 and cysteine 79-cysteine 167. An N-linked (GlcNAc...) asparagine glycan is attached at asparagine 157. A disordered region spans residues glycine 207–proline 237. Serine 329 carries GPI-anchor amidated serine lipidation. The propeptide at serine 330–tyrosine 348 is removed in mature form.

This sequence belongs to the ephrin family. In terms of assembly, interacts with lat-2. Post-translationally, may undergo proteolysis by metalloprotease sup-17 to give rise to a soluble form.

The protein resides in the cell membrane. Its function is as follows. Regulates the formation or stabilization of cell-cell contacts at several stages of epithelial morphogenesis. In early embryonic development, involved in ventral closure of the epidermis. During male tail morphogenesis, regulates precursor cell sorting together with mab-20 and allows the formation of distinct sensory rays. Probably acts as a ligand for lad-2 to regulate axon guidance of several neurons including SDQL, SDQR, SMD and PLN neurons during neurogenesis. This Caenorhabditis elegans protein is Ephrin-4 (efn-4).